A 105-amino-acid polypeptide reads, in one-letter code: Class I hydrophobin 1 (105 aa).

An N-terminal signal peptide occupies residues 1-18 (MAFIKSLLIASVAAVAFA). 4 disulfide bridges follow: cysteine 42/cysteine 83, cysteine 50/cysteine 76, cysteine 51/cysteine 62, and cysteine 84/cysteine 100.

It belongs to the fungal hydrophobin family. In terms of assembly, self-assembles to form functional amyloid fibrils called rodlets. Self-assembly into fibrillar rodlets occurs spontaneously at hydrophobic:hydrophilic interfaces and the rodlets further associate laterally to form amphipathic monolayers.

The protein localises to the secreted. It is found in the cell wall. Aerial growth, conidiation, and dispersal of filamentous fungi in the environment rely upon a capability of their secreting small amphipathic proteins called hydrophobins (HPBs) with low sequence identity. Class I can self-assemble into an outermost layer of rodlet bundles on aerial cell surfaces, conferring cellular hydrophobicity that supports fungal growth, development and dispersal; whereas Class II form highly ordered films at water-air interfaces through intermolecular interactions but contribute nothing to the rodlet structure. The protein is Class I hydrophobin 1 of Davidiella tassiana (Mycosphaerella tassiana).